We begin with the raw amino-acid sequence, 310 residues long: MPSHLLVLSLLVALLVVVSCGPGSDHGWGYDENNGPDTWQGKCQNHLKQSPIDIRAPDVDYALLHRMHFLNYDMDGKIELSNTGRTLFAGGFESWQHKQPMIQGGGLKHRYKLAQFHLHWGQNDAVGSEHAMGSLHYPAELHLVHVREGLTLKEALSRPDGLAVVGVFLAKTNDPVANKFSPISERLHDLRHSGNKTELKNFRTKYVLPLDTEAFYRYEGSLTTPDCSEAVIWTVLAEPMAISSHQLHLLRQLHNKELVKSDKNYRPLQPLNGRRIQYRPSKLDRAMICSSFATTSVIITYVAILSAMLI.

The first 20 residues, 1-20 (MPSHLLVLSLLVALLVVVSC), serve as a signal peptide directing secretion. The Alpha-carbonic anhydrase domain occupies 26-280 (HGWGYDENNG…LNGRRIQYRP (255 aa)). Zn(2+) contacts are provided by His117, His119, and His142. 223–224 (TT) contacts substrate.

The protein belongs to the alpha-carbonic anhydrase family.

The protein localises to the secreted. The enzyme catalyses hydrogencarbonate + H(+) = CO2 + H2O. Reversible hydration of carbon dioxide. The protein is Putative carbonic anhydrase 5 (cah-5) of Caenorhabditis elegans.